The chain runs to 737 residues: Delta and Notch-like epidermal growth factor-related receptor (737 aa).

A signal peptide spans 1–34 (MQPRRAQAPGAQLLPALALLLLLLGAGPRGSSLA). The Extracellular segment spans residues 35–640 (NPVPAAPLSA…LTNMPRHSLY (606 aa)). EGF-like domains are found at residues 44 to 92 (APGP…ANCQ) and 94 to 133 (VADPCASNPCHHGNCSSSSSSSSDGYLCICNEGYEGPNCE). The segment at 44–133 (APGPCAAQPC…NEGYEGPNCE (90 aa)) is interaction with NOTCH1. Cystine bridges form between Cys-48/Cys-59, Cys-53/Cys-80, Cys-82/Cys-91, Cys-98/Cys-108, Cys-103/Cys-121, and Cys-123/Cys-132. Residue Asn-223 is glycosylated (N-linked (GlcNAc...) asparagine). 5 EGF-like domains span residues 309 to 348 (PGESHANDLECSGKGKCTTKPSEATFSCTCEEQYVGTFCE), 349 to 390 (EYDA…ELCQ), 392 to 428 (KIDYCILDPCRNGATCISSLSGFTCQCPEGYFGSACE), 430 to 466 (KVDPCASSPCQNNGTCYVDGVHFTCNCSPGFTGPTCA), and 468 to 503 (LIDFCALSPCAHGTCRSVGTSYKCLCDPGYHGLYCE). Intrachain disulfides connect Cys-319-Cys-336, Cys-338-Cys-347, Cys-353-Cys-364, Cys-358-Cys-378, Cys-380-Cys-389, Cys-396-Cys-407, Cys-401-Cys-416, Cys-418-Cys-427, Cys-434-Cys-445, Cys-439-Cys-454, Cys-456-Cys-465, Cys-472-Cys-482, Cys-477-Cys-491, Cys-493-Cys-502, Cys-509-Cys-520, Cys-514-Cys-529, Cys-531-Cys-540, Cys-547-Cys-558, Cys-552-Cys-567, Cys-569-Cys-578, Cys-585-Cys-596, Cys-590-Cys-605, and Cys-607-Cys-616. The EGF-like 8; calcium-binding domain maps to 505–541 (EYNECLSAPCLNAATCRDLVNGYECVCLAEYKGTHCE). The region spanning 543–579 (YKDPCANVSCLNGATCDSDGLNGTCICAPGFTGEECD) is the EGF-like 9 domain. One can recognise a Follistatin-like domain in the interval 546-568 (PCANVSCLNGATCDSDGLNGTCI). Asn-564 carries an N-linked (GlcNAc...) asparagine glycan. The 37-residue stretch at 581-617 (DINECDSNPCHHGGSCLDQPNGYNCHCPHGWVGANCE) folds into the EGF-like 10; calcium-binding domain. The chain crosses the membrane as a helical span at residues 641–661 (IIIGALCVAFILMLIILIVGI). At 662–737 (CRISRIEYQG…LVTLIKTKDL (76 aa)) the chain is on the cytoplasmic side. An interaction with AP1G1 and somatodendritic targeting region spans residues 677 to 680 (YEEF). Ser-685 carries the post-translational modification Phosphoserine. Phosphotyrosine occurs at positions 711 and 721. Ser-722 is subject to Phosphoserine.

Interacts with AP1G1. Interacts with NOTCH1. In terms of tissue distribution, expressed in brain, spinal cord and adrenal gland.

The protein localises to the cell membrane. In terms of biological role, activator of the NOTCH1 pathway. May mediate neuron-glia interaction during astrocytogenesis. The sequence is that of Delta and Notch-like epidermal growth factor-related receptor (DNER) from Homo sapiens (Human).